Consider the following 378-residue polypeptide: ATQGQVITCKAAVAWEPNKPLTIEDVEVAPPQANEVRIQILFTALCHTDAYTLGGKDPEGLFPCILGHEAAGIVESVGEGVTDVKPGDHVIPSYQAECGECKFCKSPKTNLCGKVRAATGVGVMMADRKSRFSVKGKPIYHFMGTSTFSQYTVVHDVSVAKIHPDAPLDKVCLLGCGVPTGLGAVWNTAKVEPGSIVAIFGLGTVGLAVAEGAKSAGASRIIGIDIDSNKYDTAKNFGVTEFINPKDHEKPIQQVIIDLTDGGVDYSFECLGNVSVMRSALECCHKGWGTSVIVGVAASGQEISTRPFQLVTGRVWKGTAFGGFKSRSQVPWLVEKYLKKEIKVDEYITHNLTLLEINKAFDLLHEGQCLRCVLAVHD.

Position 1 is an N-acetylalanine (Ala1). Cys46 contributes to the Zn(2+) binding site. An NAD(+)-binding site is contributed by His47. An alcohol is bound by residues Thr48 and His68. Residues His68, Glu69, Cys98, Cys101, Cys104, Cys112, and Cys176 each coordinate Zn(2+). NAD(+) is bound by residues 201-206 (GLGTVG), Asp225, Lys230, 294-296 (VGV), 319-321 (TAF), and Arg371.

This sequence belongs to the zinc-containing alcohol dehydrogenase family. Class-III subfamily. As to quaternary structure, homodimer. Zn(2+) serves as cofactor.

It is found in the cytoplasm. The catalysed reaction is a primary alcohol + NAD(+) = an aldehyde + NADH + H(+). It carries out the reaction a secondary alcohol + NAD(+) = a ketone + NADH + H(+). The enzyme catalyses S-(hydroxymethyl)glutathione + NADP(+) = S-formylglutathione + NADPH + H(+). It catalyses the reaction S-(hydroxymethyl)glutathione + NAD(+) = S-formylglutathione + NADH + H(+). In terms of biological role, class-III ADH is remarkably ineffective in oxidizing ethanol, but it readily catalyzes the oxidation of long-chain primary alcohols and the oxidation of S-(hydroxymethyl) glutathione. The chain is Alcohol dehydrogenase class-3 from Pisum sativum (Garden pea).